We begin with the raw amino-acid sequence, 71 residues long: UPF0346 protein BCQ_2236 (71 aa).

The protein belongs to the UPF0346 family.

The protein is UPF0346 protein BCQ_2236 of Bacillus cereus (strain Q1).